Here is a 449-residue protein sequence, read N- to C-terminus: Hyaluronidase-1 (449 aa).

The signal sequence occupies residues 1–23 (MYHIWIKFLAAWIFLKRFNGVHV). Cystine bridges form between cysteine 47-cysteine 340 and cysteine 211-cysteine 227. Residues asparagine 67, asparagine 103, and asparagine 111 are each glycosylated (N-linked (GlcNAc...) asparagine). Catalysis depends on glutamate 135, which acts as the Proton donor. An N-linked (GlcNAc...) asparagine glycan is attached at asparagine 153. An N-linked (GlcNAc...) asparagine glycan is attached at asparagine 357. 3 cysteine pairs are disulfide-bonded: cysteine 365–cysteine 376, cysteine 370–cysteine 427, and cysteine 429–cysteine 438. Asparagine 401 is a glycosylation site (N-linked (GlcNAc...) asparagine). The EGF-like domain occupies 427-438 (CQCYQGWKGLYC).

Belongs to the glycosyl hydrolase 56 family. Monomer. As to expression, expressed by the venom gland.

It is found in the secreted. The enzyme catalyses Random hydrolysis of (1-&gt;4)-linkages between N-acetyl-beta-D-glucosamine and D-glucuronate residues in hyaluronate.. In terms of biological role, snake venom endo-hyaluronidase that degrades hyaluronan to smaller oligosaccharide fragments. In venom, it is not toxic by itself, but increases the diffusion of other venom proteins by degrading the extracellular matrix. In addition, it displays antiedematogenic activity. In Cerastes cerastes (Horned desert viper), this protein is Hyaluronidase-1.